The following is a 286-amino-acid chain: uncharacterized protein (286 aa).

2 disordered regions span residues 59 to 89 and 225 to 286; these read PESA…PGAK and RQRK…EDTR. Residues 69 to 85 show a composition bias toward low complexity; sequence AEAESAGTAAATESHGA.

This is an uncharacterized protein from Mus musculus (Mouse).